We begin with the raw amino-acid sequence, 160 residues long: Growth arrest and DNA damage-inducible protein GADD45 beta (160 aa).

This sequence belongs to the GADD45 family. As to quaternary structure, interacts with GADD45GIP1.

In terms of biological role, involved in the regulation of growth and apoptosis. Mediates activation of stress-responsive MTK1/MEKK4 MAPKKK. This is Growth arrest and DNA damage-inducible protein GADD45 beta (GADD45B) from Bos taurus (Bovine).